The chain runs to 182 residues: ATP synthase subunit delta (182 aa).

This sequence belongs to the ATPase delta chain family. As to quaternary structure, F-type ATPases have 2 components, F(1) - the catalytic core - and F(0) - the membrane proton channel. F(1) has five subunits: alpha(3), beta(3), gamma(1), delta(1), epsilon(1). F(0) has three main subunits: a(1), b(2) and c(10-14). The alpha and beta chains form an alternating ring which encloses part of the gamma chain. F(1) is attached to F(0) by a central stalk formed by the gamma and epsilon chains, while a peripheral stalk is formed by the delta and b chains.

The protein localises to the cell membrane. Functionally, f(1)F(0) ATP synthase produces ATP from ADP in the presence of a proton or sodium gradient. F-type ATPases consist of two structural domains, F(1) containing the extramembraneous catalytic core and F(0) containing the membrane proton channel, linked together by a central stalk and a peripheral stalk. During catalysis, ATP synthesis in the catalytic domain of F(1) is coupled via a rotary mechanism of the central stalk subunits to proton translocation. Its function is as follows. This protein is part of the stalk that links CF(0) to CF(1). It either transmits conformational changes from CF(0) to CF(1) or is implicated in proton conduction. This is ATP synthase subunit delta from Lactobacillus gasseri (strain ATCC 33323 / DSM 20243 / BCRC 14619 / CIP 102991 / JCM 1131 / KCTC 3163 / NCIMB 11718 / NCTC 13722 / AM63).